Reading from the N-terminus, the 182-residue chain is Transcription termination/antitermination protein NusG (182 aa).

A KOW domain is found at 131–161; that stretch reads GEVVRVNDGPFADFNGTVEEVDYEKSRLKVS.

Belongs to the NusG family.

In terms of biological role, participates in transcription elongation, termination and antitermination. The protein is Transcription termination/antitermination protein NusG of Vibrio cholerae serotype O1 (strain ATCC 39315 / El Tor Inaba N16961).